A 480-amino-acid polypeptide reads, in one-letter code: Ribosomal protein uS12 methylthiotransferase RimO (480 aa).

Residues 14–135 (LSVAMVTLGC…IAARLRSIVA (122 aa)) enclose the MTTase N-terminal domain. The [4Fe-4S] cluster site is built by Cys23, Cys59, Cys98, Cys193, Cys197, and Cys200. The Radical SAM core domain maps to 179 to 410 (LDDGPTAALK…DLVEELTSQR (232 aa)). The TRAM domain occupies 412–480 (AERLGEQVEV…EGADLDARPL (69 aa)).

Belongs to the methylthiotransferase family. RimO subfamily. [4Fe-4S] cluster is required as a cofactor.

It is found in the cytoplasm. The catalysed reaction is L-aspartate(89)-[ribosomal protein uS12]-hydrogen + (sulfur carrier)-SH + AH2 + 2 S-adenosyl-L-methionine = 3-methylsulfanyl-L-aspartate(89)-[ribosomal protein uS12]-hydrogen + (sulfur carrier)-H + 5'-deoxyadenosine + L-methionine + A + S-adenosyl-L-homocysteine + 2 H(+). Its function is as follows. Catalyzes the methylthiolation of an aspartic acid residue of ribosomal protein uS12. The polypeptide is Ribosomal protein uS12 methylthiotransferase RimO (Nocardioides sp. (strain ATCC BAA-499 / JS614)).